The following is a 244-amino-acid chain: Phosphoadenosine 5'-phosphosulfate reductase (244 aa).

The active-site Nucleophile; cysteine thiosulfonate intermediate is C239.

This sequence belongs to the PAPS reductase family. CysH subfamily.

The protein localises to the cytoplasm. The enzyme catalyses [thioredoxin]-disulfide + sulfite + adenosine 3',5'-bisphosphate + 2 H(+) = [thioredoxin]-dithiol + 3'-phosphoadenylyl sulfate. Its pathway is sulfur metabolism; hydrogen sulfide biosynthesis; sulfite from sulfate: step 3/3. Catalyzes the formation of sulfite from phosphoadenosine 5'-phosphosulfate (PAPS) using thioredoxin as an electron donor. The sequence is that of Phosphoadenosine 5'-phosphosulfate reductase from Citrobacter koseri (strain ATCC BAA-895 / CDC 4225-83 / SGSC4696).